A 678-amino-acid chain; its full sequence is Chloride channel protein ClC-Kb (678 aa).

Residues 1–50 (MEELVGLREGSSGNPVALRELWSPCPRLRRGIRGGLEWLKQKLFRVGEDW) are Cytoplasmic-facing. 2 helical membrane passes run 51-82 (YFLM…KWLY) and 91-111 (LRYL…SGFS). The helical intramembrane region spans 116 to 127 (PFSGGSGIPELK). Ser121 lines the chloride pocket. The next 2 membrane-spanning stretches (helical) occupy residues 141 to 160 (IKNF…TGST) and 161 to 180 (LFLG…AAYL). The helical intramembrane region spans 203–224 (AGAAVGVATVFAAPFSGVLFCI). The chain crosses the membrane as a helical span at residues 236-255 (YWRGFFAATCGAFMFRLLAV). Glu259, Glu261, Asp278, and Glu281 together coordinate Ca(2+). 2 consecutive transmembrane segments (helical) span residues 282–310 (IFFF…LAFT) and 325–342 (PLYA…TYPP). An intramembrane region (helical) is located at residues 349 to 360 (ASRLSMREHLDT). Asn364 is a glycosylation site (N-linked (GlcNAc...) asparagine). Helical transmembrane passes span 400 to 420 (GTLA…TTIP) and 421 to 440 (MPAG…GRLL). Phe426 contacts chloride. An intramembrane region (helical) is located at residues 464-496 (GGYALAGAAAFSGAVTHSISTALLAFELTGQIV). The chain crosses the membrane as a helical span at residues 500 to 520 (PVLMAVLAANAIAQSCQPSFY). The Cytoplasmic portion of the chain corresponds to 521 to 678 (DGTIMVKKLP…SWVERQHTGF (158 aa)). 2 consecutive CBS domains span residues 551–612 (MRRA…ARAS) and 620–678 (DILA…HTGF).

This sequence belongs to the chloride channel (TC 2.A.49) family. CLCNKB subfamily. Homodimer. Interacts with BSND. N-glycosylated. In terms of tissue distribution, expressed predominantly in the kidney.

It localises to the basolateral cell membrane. It carries out the reaction chloride(in) = chloride(out). The enzyme catalyses iodide(out) = iodide(in). The catalysed reaction is nitrate(in) = nitrate(out). It catalyses the reaction bromide(in) = bromide(out). In terms of biological role, anion-selective channel permeable to small monovalent anions with ion selectivity for chloride &gt; bromide &gt; nitrate &gt; iodide. Forms a homodimeric channel where each subunit has its own ion conduction pathway. May conduct double-barreled currents controlled by two types of gates, two fast gates that control each subunit independently and a slow common gate that opens and shuts off both subunits simultaneously. Assembles with the regulatory subunit BSND/Barttin for sorting at the basolateral plasma membrane domain and functional switch to the ion conducting state. CLCNKB:BSND channels display mostly a linear current-voltage relationship controlled by common gate. Mediates chloride conductance along nephron segments, namely the thick ascending limb of Henle's loop, convoluted tubule and the collecting duct, contributing to the maintenance of systemic acid-base and electrolyte homeostasis. Conducts chloride currents in the stria vascularis of the inner ear to establish the endocochlear potential necessary for normal hearing. This Oryctolagus cuniculus (Rabbit) protein is Chloride channel protein ClC-Kb (CLCNKB).